A 229-amino-acid chain; its full sequence is Flagellar calcium-binding protein TB-1.7G (229 aa).

Residues 1-25 are disordered; the sequence is GSKNASNPKDGAASKGGKDGKTTAD. The segment covering 16–25 has biased composition (basic and acidic residues); that stretch reads GGKDGKTTAD. 4 consecutive EF-hand domains span residues 44–79, 80–115, 126–161, and 163–198; these read ESKSRRIELFKQFDTNGTGKLGFREVLDGCYGILKL, DEFTTHLPDIVQRAFDKAKDLGNKVKGVGEEDLVEF, YDIFELTVMFDTMDKDGSLLLELQEFKEALPKLKEW, and VDITDATTVFNEIDTNGSGVVTFDEFSCWAVTKKLQ. Residues Asp57, Asn59, Thr61, Lys63, and Glu68 each coordinate Ca(2+). Positions 139, 141, 143, 150, 176, 178, 180, and 187 each coordinate Ca(2+). Positions 202 to 229 are disordered; it reads DPDDEENGANEGDGANAGDGVPAAEGSA. Residues 210–221 show a composition bias toward low complexity; the sequence is ANEGDGANAGDG.

It belongs to the calflagin family.

It localises to the cell projection. The protein resides in the cilium. It is found in the flagellum. In terms of biological role, may contribute to the rapid motility of the trypanosomes, playing a role either in flagellar structure or in calcium metabolism. Could alternate between a GDP-bound inactive form to a calcium/GTP-bound active form. In Trypanosoma brucei brucei, this protein is Flagellar calcium-binding protein TB-1.7G.